Reading from the N-terminus, the 406-residue chain is L-methionine gamma-lyase (406 aa).

Residues 76 to 78 (YQR) and 106 to 107 (GM) each bind pyridoxal 5'-phosphate. Y132 is an L-homocysteine binding site. 219-221 (SAT) serves as a coordination point for pyridoxal 5'-phosphate. N6-(pyridoxal phosphate)lysine is present on K222. R380 serves as a coordination point for L-homocysteine. R380 is a binding site for L-methionine.

This sequence belongs to the trans-sulfuration enzymes family. L-methionine gamma-lyase subfamily. As to quaternary structure, homotetramer. The cofactor is pyridoxal 5'-phosphate.

It carries out the reaction L-methionine + H2O = methanethiol + 2-oxobutanoate + NH4(+). The catalysed reaction is L-homocysteine + H2O = 2-oxobutanoate + hydrogen sulfide + NH4(+) + H(+). With respect to regulation, is inhibited in vitro by carbonyl reagents, completely inactivated by DL-propargylglycine, and unaffected by metal-chelating agents. In terms of biological role, catalyzes the alpha,gamma-elimination of L-methionine to produce methanethiol, 2-oxobutanoate and ammonia. May be responsible for the production of methanethiol associated with desirable Cheddar-type sulfur notes during cheese ripening. Is also able to catalyze the alpha,gamma-elimination of L-homocysteine and DL-selenomethionine, but has no activity toward L-cysteine, L-cystathionine, S-adenosyl-L-homocysteine and D-methionine. The sequence is that of L-methionine gamma-lyase from Brevibacterium aurantiacum.